We begin with the raw amino-acid sequence, 1522 residues long: Histone-lysine N-methyltransferase EZH2 (1522 aa).

The disordered stretch occupies residues 1–196 (MSPARGDANA…PKTPTPKNTE (196 aa)). Over residues 39-61 (NRENLRDRDRADKLEKLEKDAHA) the composition is skewed to basic and acidic residues. Low complexity-rich tracts occupy residues 64–76 (QTQTQVQAPPVTV) and 103–130 (RGSTSSTPTTTIPPLRPGRPSSPESPSL). The segment covering 141–162 (ILASRTSRFSNRTGIRDSQSPS) has biased composition (polar residues). A compositionally biased stretch (low complexity) spans 180–195 (ATSNTPAPKTPTPKNT). Positions 190–220 (PTPKNTEWTVDKIASALSVLAEEVPQNHSRL) are SBD domain. Positions 221–250 (VNFLLEETEKRAPQPRHLSKTDPFAHMKSK) are EBD domain. Residues 251–300 (AIDANRPRPEGVPTMDVKFKQHSGEYGKSRNSGRRFQYPVVCIKPDREPV) are BAM domain. An SAL domain region spans residues 301-320 (PPYRFHHAEIRKNILALNSQ). The interval 321–360 (LNFVPHLRDVDPNSAEEQKYSAWLMDLENLDSKSGFKIQP) is SRM domain. The segment at 361–480 (RSQKIAKRAQ…PIFDNKRAKD (120 aa)) is SANT1L domain. The segment at 406 to 426 (PESDDSMTPQQKSNLLDTYSD) is disordered. Residues 411–422 (SMTPQQKSNLLD) are compositionally biased toward polar residues. The tract at residues 481-560 (APGSQKPPDE…EQRQKTEGGS (80 aa)) is MCSS domain. Positions 508, 511, 516, 518, 570, 574, 615, 625, 685, 687, 691, 697, 699, 709, 713, 715, 720, 727, 729, 736, 746, 748, 755, 760, 763, and 784 each coordinate Zn(2+). The SANT2L domain stretch occupies residues 561-650 (ANAPPAHPPC…PVEPRTIPKQ (90 aa)). Residues 658–780 (RRKKQLMSDW…PENAYDEVLH (123 aa)) enclose the CXC domain. The 125-residue stretch at 795 to 919 (KAVVLGKSQL…AGEELFFNYG (125 aa)) folds into the SET domain. Residues Tyr-809, Lys-852, Ser-854, and Tyr-855 each contribute to the S-adenosyl-L-homocysteine site. Residues Tyr-809, Lys-852, Ser-854, Tyr-855, Asn-880, His-881, and Thr-926 each contribute to the S-adenosyl-L-methionine site. His-881 lines the S-adenosyl-L-homocysteine pocket. Lys-927 is a binding site for S-adenosyl-L-homocysteine. A disordered region spans residues 933 to 1522 (NEQSGAETTP…KPARYRDEGE (590 aa)). A compositionally biased stretch (polar residues) spans 935–946 (QSGAETTPQQPK). The segment covering 971 to 988 (GFDDDDRDGNDSDPDDLW) has biased composition (acidic residues). The segment covering 992–1024 (QQQQQQQQQQQQQQQQQQQQQQQQQQQQQQQQQ) has biased composition (low complexity). The segment covering 1025 to 1038 (AQKPQPSTSHQPQS) has biased composition (polar residues). A compositionally biased stretch (basic and acidic residues) spans 1053–1066 (SPDKQLRRENHDAQ). The span at 1072–1091 (QFQQQEQQQQQQQQQQQQQQ) shows a compositional bias: low complexity. Over residues 1127–1136 (DSSSGGSANE) the composition is skewed to polar residues. Basic residues predominate over residues 1142-1162 (KPSRRGGARPGAGRKPKHRPP). Composition is skewed to basic and acidic residues over residues 1207 to 1221 (SDSKDEAKEEETDKE) and 1228 to 1238 (VNEKDREKGRD). Positions 1255–1299 (KSAPSPAKKQASSPTKISDSNRTTSKNTSSNNNNNTNNNNNNNNN) are enriched in low complexity. Residues 1316–1330 (HLTNSQPAALSPSAT) show a composition bias toward polar residues. Composition is skewed to low complexity over residues 1355–1385 (STMTTTTTTTTTTTSSSSSSSSSSSSSSSSS) and 1415–1428 (SSSLSSSHSMSVFS). The span at 1455-1464 (SGLNSTSLSQ) shows a compositional bias: polar residues. Over residues 1465 to 1494 (ERGEKHEKHEKEKPKEKKGEKERERERDRS) the composition is skewed to basic and acidic residues.

The protein belongs to the class V-like SAM-binding methyltransferase superfamily. Histone-lysine methyltransferase family. EZ subfamily. As to quaternary structure, component of the polycomb repressive complex 2 (PRC2) that consists of four core subunits icluding EZH2, EED, SUZ12, and RBBP4, among which EZH2 is the catalytic subunit and which minimally requires EED and SUZ12 for catalysis.

It is found in the nucleus. The catalysed reaction is L-lysyl(27)-[histone H3] + 3 S-adenosyl-L-methionine = N(6),N(6),N(6)-trimethyl-L-lysyl(27)-[histone H3] + 3 S-adenosyl-L-homocysteine + 3 H(+). Its activity is regulated as follows. The end product of PRC2 catalysis, H3K27me3, interacts with EED to stimulate the enzymatic activity of PRC2 allosterically. The enzymatic activity of PRC2 is regulated in a very complex manner and PCR2 can adopt different stages including the autoinhibited (A); SAM-bound autoinhibited (A'), basal (B), and H3K27me3-stimulated (S) stages. Actictivity is inhibited by pyridone inhibitors such as GSK126. Its function is as follows. Catalytic subunit of the of the Polycomb Repressive Complex 2 (PRC2), a histone H3 lysine methyltransferase responsible for generating mono-, di-, and tri-methylation on Lys27 (H3K27me1, H3K27me2 and H3K27me3). The tri-methylated form is known to be critical in gene repression, and its proper placement is essential in defining repression patterns during development. The PRC2 complex interacts with thousands of RNA species in vivo, but the physiological function of RNA binding has still to be determined. The chain is Histone-lysine N-methyltransferase EZH2 from Chaetomium thermophilum (strain DSM 1495 / CBS 144.50 / IMI 039719) (Thermochaetoides thermophila).